The following is a 348-amino-acid chain: Protein disulfide isomerase CRELD2 (348 aa).

The signal sequence occupies residues 1–22; it reads MHLPPAAAVGLLLLLLPPPARV. The short motif at 30-33 is the CXXC element; sequence CQRC. 4 disulfides stabilise this stretch: Cys30–Cys33, Cys139–Cys153, Cys147–Cys165, and Cys167–Cys176. The 43-residue stretch at 135–177 folds into the EGF-like 1 domain; that stretch reads DCQECQGGSQRPCSGNGHCDGDGSRQGDGSCQCHVGYKGPLCI. One copy of the FU 1 repeat lies at 192–239; that stretch reads HSFCTACDESCKTCSGPTNKGCVECEVGWTRVEDACVDVDECAAETPP. A glycan (N-linked (GlcNAc...) asparagine) is linked at Asn250. The FU 2 repeat unit spans residues 252–299; sequence SYTCEECDSTCVGCTGKGPANCKECISGYSKQKGECADIDECSLETKV. The short motif at 262-265 is the CXXC element; it reads CVGC. 4 cysteine pairs are disulfide-bonded: Cys262/Cys265, Cys293/Cys307, Cys300/Cys316, and Cys318/Cys328. The EGF-like 2; calcium-binding domain maps to 289 to 329; it reads DIDECSLETKVCKKENENCYNTPGSFVCVCPEGFEEDRRCL.

Belongs to the CRELD family. As to quaternary structure, interacts with CHRNA4. Component of a complex containing at least CRELD2, MANF, MATN3 and PDIA4.

It localises to the endoplasmic reticulum. The enzyme catalyses Catalyzes the rearrangement of -S-S- bonds in proteins.. Functionally, protein disulfide isomerase. Might play a role in the unfolded protein response. May regulate transport of alpha4-beta2 neuronal acetylcholine receptor. The polypeptide is Protein disulfide isomerase CRELD2 (CRELD2) (Cricetulus griseus (Chinese hamster)).